Reading from the N-terminus, the 480-residue chain is MATAANQIGRITQVIGAVVDVQFEGHLPAILNSLETKNAGNRLVLEVAQHLGESTVRTIAMDTTEGLVRGQEVTDTGAPIRVPVGEGTLGRIINVIGEPIDEAGPVKADSLRAIHQEAPSYTDQSTEAEILVTGIKVVDLLAPYAKGGKIGLFGGAGVGKTVLIQELINNVAKAHGGYSVFAGVGERTREGNDLYHEFIESKVNADPHNPDPSVKSKCALVFGQMNEPPGARARVALTGLTIAEDFRDKGQDVLFFVDNIFRFTQAGSEVSALLGRIPSAVGYQPTLATDMGALQERITTTTKGSITSVQAIYVPADDLTDPAPATSFAHLDATTTLSRSIAEKGIYPAVDPLDSTSRMLSPLVVGEEHYAVARQVQQVLQRYKALQDIIAILGMDELSEEDKLTVARARKVERFMSQPFHVAEIFTGSPGKFVELADTIKGFKGLVEGKYDHLPEAAFYMVGTIEEAVEKGKKLAAEAA.

154-161 (GGAGVGKT) contacts ATP.

The protein belongs to the ATPase alpha/beta chains family. F-type ATPases have 2 components, CF(1) - the catalytic core - and CF(0) - the membrane proton channel. CF(1) has five subunits: alpha(3), beta(3), gamma(1), delta(1), epsilon(1). CF(0) has four main subunits: a(1), b(1), b'(1) and c(9-12).

It is found in the cell inner membrane. It catalyses the reaction ATP + H2O + 4 H(+)(in) = ADP + phosphate + 5 H(+)(out). Functionally, produces ATP from ADP in the presence of a proton gradient across the membrane. The catalytic sites are hosted primarily by the beta subunits. The protein is ATP synthase subunit beta 1 of Bradyrhizobium sp. (strain BTAi1 / ATCC BAA-1182).